Reading from the N-terminus, the 193-residue chain is Flagellin B3 (193 aa).

Residues methionine 1–glycine 12 constitute a propeptide that is removed on maturation.

This sequence belongs to the archaeal flagellin family. Post-translationally, glycosylated.

The protein localises to the archaeal flagellum. In terms of biological role, flagellin is the subunit protein which polymerizes to form the filaments of archaeal flagella. This Halobacterium salinarum (strain ATCC 700922 / JCM 11081 / NRC-1) (Halobacterium halobium) protein is Flagellin B3 (flaB3).